The chain runs to 176 residues: MALLLLSLGLSLIAAQEFDPHTVMQRNYNVARVSGVWYSIFMASDDLNRIKENGDLRVFVRNIEHLKNGSLIFDFEYMVQGECVAVVVVCEKTEKNGEYSINYEGQNTVAVSETDYRLFITFHLQNFRNGTETHTLALYETCEKYGLGSQNIIDLTNKDPCYSKHYRSPPRPPMRW.

The N-terminal stretch at 1–15 is a signal peptide; it reads MALLLLSLGLSLIAA. N-linked (GlcNAc...) asparagine glycans are attached at residues Asn-68 and Asn-129. A disulfide bridge links Cys-83 with Cys-161.

Belongs to the calycin superfamily. Lipocalin family.

It is found in the secreted. The sequence is that of Epididymal-specific lipocalin-9 from Homo sapiens (Human).